Consider the following 261-residue polypeptide: Putative hydro-lyase Nther_1142 (261 aa).

The protein belongs to the D-glutamate cyclase family.

The chain is Putative hydro-lyase Nther_1142 from Natranaerobius thermophilus (strain ATCC BAA-1301 / DSM 18059 / JW/NM-WN-LF).